A 256-amino-acid polypeptide reads, in one-letter code: Acetyl-coenzyme A carboxylase carboxyl transferase subunit beta 2 (256 aa).

In terms of domain architecture, CoA carboxyltransferase N-terminal spans 1 to 256; it reads MTVKCNKCKE…LAIHAETVSA (256 aa). The Zn(2+) site is built by C5, C8, C24, and C27. A C4-type zinc finger spans residues 5-27; that stretch reads CNKCKEEINKEDLEKNYYICPLC.

It belongs to the AccD/PCCB family. Acetyl-CoA carboxylase is a heterohexamer composed of biotin carboxyl carrier protein (AccB), biotin carboxylase (AccC) and two subunits each of ACCase subunit alpha (AccA) and ACCase subunit beta (AccD). It depends on Zn(2+) as a cofactor.

It localises to the cytoplasm. It carries out the reaction N(6)-carboxybiotinyl-L-lysyl-[protein] + acetyl-CoA = N(6)-biotinyl-L-lysyl-[protein] + malonyl-CoA. Its pathway is lipid metabolism; malonyl-CoA biosynthesis; malonyl-CoA from acetyl-CoA: step 1/1. In terms of biological role, component of the acetyl coenzyme A carboxylase (ACC) complex. Biotin carboxylase (BC) catalyzes the carboxylation of biotin on its carrier protein (BCCP) and then the CO(2) group is transferred by the transcarboxylase to acetyl-CoA to form malonyl-CoA. This chain is Acetyl-coenzyme A carboxylase carboxyl transferase subunit beta 2, found in Lachnospira eligens (strain ATCC 27750 / DSM 3376 / VPI C15-48 / C15-B4) (Eubacterium eligens).